A 494-amino-acid chain; its full sequence is MDCSSPLSLFHLLLVCTVMVKCCSASDLHYSDALEKSILFFEGQRSGKLPTNQRLTWRGDSGLSDGSSYHVDLVGGYYDAGDNLKFGLPMAFTTTMLAWGIIEFGCLMPEQVENARAALRWSTDYLLKASTATSNSLYVQVGEPNADHRCWERPEDMDTPRNVYKVSTQNPGSDVAAETAAALAAASIVFGDSDSSYSTKLLHTAVKVFEFADQYRGSYSDSLGSVVCPFYCSYSGYNDELLWGASWLHRASQNASYMTYIQSNGHTLGADDDDYSFSWDDKRVGTKVLLSKGFLQDRIEELQLYKVHTDNYICSLIPGTSSFQAQYTPGGLLYKGSASNLQYVTSTAFLLLTYANYLNSSGGHASCGTTTVTAKNLISLAKKQVDYILGQNPAKMSYMVGFGERYPQHVHHRGSSLPSVQVHPNSIPCNAGFQYLYSSPPNPNILVGAILGGPDNRDSFSDDRNNYQQSEPATYINAPLVGALAFFAANPVTE.

Residues 1 to 25 (MDCSSPLSLFHLLLVCTVMVKCCSA) form the signal peptide. Residue Asp-82 is the Nucleophile of the active site. N-linked (GlcNAc...) asparagine glycosylation is found at Asn-254 and Asn-359. Residues His-411, Asp-462, and Glu-471 contribute to the active site.

Belongs to the glycosyl hydrolase 9 (cellulase E) family.

The enzyme catalyses Endohydrolysis of (1-&gt;4)-beta-D-glucosidic linkages in cellulose, lichenin and cereal beta-D-glucans.. In terms of biological role, involved in ripening fruit process. This Persea americana (Avocado) protein is Endoglucanase 1 (CEL1).